The primary structure comprises 210 residues: Cytochrome c4 (210 aa).

The signal sequence occupies residues 1–20 (MNKVLVSLLLTLGITGMAHA). 8 residues coordinate heme c: cysteine 34, cysteine 37, histidine 38, methionine 86, cysteine 139, cysteine 142, histidine 143, and methionine 187.

Binds 2 heme c groups covalently per subunit.

The protein localises to the periplasm. Diheme, high potential cytochrome c believed to be an intermediate electron donor to terminal oxidation systems. The protein is Cytochrome c4 (cc4) of Stutzerimonas stutzeri (Pseudomonas stutzeri).